Here is a 415-residue protein sequence, read N- to C-terminus: Glutamyl-tRNA reductase (415 aa).

Substrate-binding positions include 49 to 52 (TCNR), Ser-104, 109 to 111 (EPQ), and Gln-115. Cys-50 serves as the catalytic Nucleophile. 184 to 189 (GAGEMI) is a binding site for NADP(+).

Belongs to the glutamyl-tRNA reductase family. As to quaternary structure, homodimer.

The catalysed reaction is (S)-4-amino-5-oxopentanoate + tRNA(Glu) + NADP(+) = L-glutamyl-tRNA(Glu) + NADPH + H(+). It participates in porphyrin-containing compound metabolism; protoporphyrin-IX biosynthesis; 5-aminolevulinate from L-glutamyl-tRNA(Glu): step 1/2. Its function is as follows. Catalyzes the NADPH-dependent reduction of glutamyl-tRNA(Glu) to glutamate 1-semialdehyde (GSA). This is Glutamyl-tRNA reductase from Neisseria meningitidis serogroup C / serotype 2a (strain ATCC 700532 / DSM 15464 / FAM18).